The following is a 531-amino-acid chain: MNFVQPVIQWASLAPILIVLGAAVLGVLIEAFAPRRVRRPVQVTLALLAAAGAFGAIAWRWAEVIGGGGGAPSTVVVGQLVEDGPALAAQGIIAILAFVGILVIAERGRRGAPGSEDAFAPQGASVPGSDYEDRARRAGLVQTEVYPLVLFSVGGMLVFPAAGDLLTLFIALEVLSLPLYLLSGLARRRRLLSQEASMKYFLLGAFSSALLLFGIALLYGYSGSVAIGEIHAATQATTGMDGLLVVGLVLLISGLLFKVGAVPFHAWTPDVYQGAPTPITGFMAACTKVAAFGALLRVVYVVAPAMTWDIQPFLWVVAVLTMVVGTVLAIVQTDMKRTLAYSSVAHAGFLLVGVVAMSPEGISSVFFYLLAYGLATIGAFALVALVRERDAEGNVTAEASHLAQWAGLGRRSPVVATVFALYLLSFAGIPLTSGFVGKFVAFAAAIDGGAWPLVVVGVLASAAAAFFYVRIIVLMFFTSPAEEAGAPSTTVVRSQGFTAVAVALTAAATLVLGVWPTPVLDLLAQATKFVV.

13 consecutive transmembrane segments (helical) span residues 13–33 (LAPI…EAFA), 45–65 (LALL…AEVI), 85–105 (PALA…LVIA), 150–170 (LFSV…TLFI), 200–220 (YFLL…LLYG), 242–262 (GLLV…VGAV), 289–309 (VAAF…MTWD), 310–330 (IQPF…VLAI), 339–359 (LAYS…AMSP), 365–385 (VFFY…LVAL), 415–435 (VATV…TSGF), 460–480 (ASAA…FTSP), and 496–516 (GFTA…GVWP).

The protein belongs to the complex I subunit 2 family. In terms of assembly, NDH-1 is composed of 14 different subunits. Subunits NuoA, H, J, K, L, M, N constitute the membrane sector of the complex.

It is found in the cell membrane. The catalysed reaction is a quinone + NADH + 5 H(+)(in) = a quinol + NAD(+) + 4 H(+)(out). Its function is as follows. NDH-1 shuttles electrons from NADH, via FMN and iron-sulfur (Fe-S) centers, to quinones in the respiratory chain. The immediate electron acceptor for the enzyme in this species is believed to be a menaquinone. Couples the redox reaction to proton translocation (for every two electrons transferred, four hydrogen ions are translocated across the cytoplasmic membrane), and thus conserves the redox energy in a proton gradient. This Beutenbergia cavernae (strain ATCC BAA-8 / DSM 12333 / CCUG 43141 / JCM 11478 / NBRC 16432 / NCIMB 13614 / HKI 0122) protein is NADH-quinone oxidoreductase subunit N.